The chain runs to 1133 residues: ATP-dependent DNA helicase homolog MER3 (1133 aa).

In terms of domain architecture, Helicase ATP-binding spans 34–229 (PLCFHSDINM…WLKVPTAGIK (196 aa)). 47-54 (APTGSGKT) is a binding site for ATP. Residues 165–168 (DEVH) carry the DEVH box motif. Residues 263 to 460 (YIYDILMQYS…CLIEHLTAEI (198 aa)) enclose the Helicase C-terminal domain. The SEC63 domain maps to 536–847 (EPGRLMTKYY…FEEYIGIDLH (312 aa)). The segment at 878 to 919 (ACIADDDNPVTSGPSNRKDKKDDMPSFKLIDDDSEEEKEPYV) is disordered. A compositionally biased stretch (basic and acidic residues) spans 893–908 (NRKDKKDDMPSFKLID). The span at 909 to 919 (DDSEEEKEPYV) shows a compositional bias: acidic residues.

Belongs to the helicase family. SKI2 subfamily. As to expression, expressed in meiocytes during meiosis.

The protein localises to the nucleus. The enzyme catalyses Couples ATP hydrolysis with the unwinding of duplex DNA by translocating in the 3'-5' direction.. The catalysed reaction is ATP + H2O = ADP + phosphate + H(+). Functionally, DNA helicase required for crossover formation, complete synapsis of homologous chromosomes and bivalent formation during meiosis. Is specific to recombination events resulting in interference-sensitive crossovers (class I meiotic crossover). In Arabidopsis thaliana (Mouse-ear cress), this protein is ATP-dependent DNA helicase homolog MER3.